The chain runs to 87 residues: uncharacterized protein (87 aa).

This sequence belongs to the YlmC/YmxH family.

This is an uncharacterized protein from Clostridium acetobutylicum (strain ATCC 824 / DSM 792 / JCM 1419 / IAM 19013 / LMG 5710 / NBRC 13948 / NRRL B-527 / VKM B-1787 / 2291 / W).